The chain runs to 178 residues: uncharacterized protein (178 aa).

This sequence belongs to the mycobacterial PPE family.

This is an uncharacterized protein from Mycobacterium tuberculosis (strain CDC 1551 / Oshkosh).